The following is a 25-amino-acid chain: Bacteriocin mutacin F-59.1 (25 aa).

An intrachain disulfide couples Cys9 to Xaa14.

It localises to the secreted. Its function is as follows. Bactericidal activity against a wide range of pathogenic bacteria, including Bacillus spp., Enterococcus spp., Listeria spp., Staphylococcus spp. and Streptococcus spp. Has no activity against Lactobacillus salivarius, Staphylococcus aureus, Streptococcus pyogenes and Streptococcus suis. The polypeptide is Bacteriocin mutacin F-59.1 (Streptococcus mutans).